The sequence spans 599 residues: Elongation factor 4 (599 aa).

One can recognise a tr-type G domain in the interval 5 to 187 (KNIRNFSIIA…QLVERIPAPE (183 aa)). GTP is bound by residues 17–22 (DHGKST) and 134–137 (NKID).

It belongs to the TRAFAC class translation factor GTPase superfamily. Classic translation factor GTPase family. LepA subfamily.

It localises to the cell inner membrane. It carries out the reaction GTP + H2O = GDP + phosphate + H(+). In terms of biological role, required for accurate and efficient protein synthesis under certain stress conditions. May act as a fidelity factor of the translation reaction, by catalyzing a one-codon backward translocation of tRNAs on improperly translocated ribosomes. Back-translocation proceeds from a post-translocation (POST) complex to a pre-translocation (PRE) complex, thus giving elongation factor G a second chance to translocate the tRNAs correctly. Binds to ribosomes in a GTP-dependent manner. The chain is Elongation factor 4 from Alcanivorax borkumensis (strain ATCC 700651 / DSM 11573 / NCIMB 13689 / SK2).